Reading from the N-terminus, the 154-residue chain is Protein SprT-like (154 aa).

The SprT-like domain occupies 6–144 (LQQLTETISL…CGTCHGKLKF (139 aa)). Residue histidine 67 participates in Zn(2+) binding. The active site involves glutamate 68. Histidine 71 is a binding site for Zn(2+).

The protein belongs to the SprT family. The cofactor is Zn(2+).

It is found in the cytoplasm. The sequence is that of Protein SprT-like from Shouchella clausii (strain KSM-K16) (Alkalihalobacillus clausii).